The primary structure comprises 332 residues: Clavesin-1 (332 aa).

The 162-residue stretch at 96-257 folds into the CRAL-TRIO domain; the sequence is IKRALMDGFP…EFGGTLPPYD (162 aa). The interval 300-332 is disordered; it reads KYMKRSHSVVEPGTLRHEEERENENTQPLLALD. Basic and acidic residues predominate over residues 313 to 323; sequence TLRHEEERENE.

The protein resides in the golgi apparatus. Its subcellular location is the trans-Golgi network membrane. It localises to the early endosome membrane. It is found in the cytoplasmic vesicle. The protein localises to the clathrin-coated vesicle. Functionally, required for normal morphology of late endosomes and/or lysosomes in neurons. Binds phosphatidylinositol 3,5-bisphosphate (PtdIns(3,5)P2). The protein is Clavesin-1 (clvs1) of Xenopus laevis (African clawed frog).